Here is a 533-residue protein sequence, read N- to C-terminus: Na(+)/H(+) antiporter NhaB (533 aa).

The next 11 membrane-spanning stretches (helical) occupy residues I10 to I30, P67 to L87, V96 to F116, V131 to I165, L209 to P229, I247 to V267, A310 to I330, E355 to I375, L396 to G416, A454 to I474, and M481 to E501.

Belongs to the NhaB Na(+)/H(+) (TC 2.A.34) antiporter family.

It is found in the cell inner membrane. The enzyme catalyses 2 Na(+)(in) + 3 H(+)(out) = 2 Na(+)(out) + 3 H(+)(in). In terms of biological role, na(+)/H(+) antiporter that extrudes sodium in exchange for external protons. This chain is Na(+)/H(+) antiporter NhaB, found in Shewanella sp. (strain MR-4).